A 371-amino-acid polypeptide reads, in one-letter code: S-adenosylmethionine:tRNA ribosyltransferase-isomerase (371 aa).

This sequence belongs to the QueA family. In terms of assembly, monomer.

It is found in the cytoplasm. The catalysed reaction is 7-aminomethyl-7-carbaguanosine(34) in tRNA + S-adenosyl-L-methionine = epoxyqueuosine(34) in tRNA + adenine + L-methionine + 2 H(+). Its pathway is tRNA modification; tRNA-queuosine biosynthesis. Functionally, transfers and isomerizes the ribose moiety from AdoMet to the 7-aminomethyl group of 7-deazaguanine (preQ1-tRNA) to give epoxyqueuosine (oQ-tRNA). The polypeptide is S-adenosylmethionine:tRNA ribosyltransferase-isomerase (Prochlorococcus marinus (strain MIT 9303)).